Consider the following 314-residue polypeptide: Ribosomal RNA large subunit methyltransferase F (314 aa).

It belongs to the methyltransferase superfamily. METTL16/RlmF family.

It localises to the cytoplasm. The catalysed reaction is adenosine(1618) in 23S rRNA + S-adenosyl-L-methionine = N(6)-methyladenosine(1618) in 23S rRNA + S-adenosyl-L-homocysteine + H(+). Functionally, specifically methylates the adenine in position 1618 of 23S rRNA. The polypeptide is Ribosomal RNA large subunit methyltransferase F (Flavobacterium psychrophilum (strain ATCC 49511 / DSM 21280 / CIP 103535 / JIP02/86)).